The sequence spans 338 residues: Ribosomal RNA large subunit methyltransferase F (338 aa).

Residues 1 to 21 (MTQKKNKPTQKKKGLHPRNPH) form a disordered region.

Belongs to the methyltransferase superfamily. METTL16/RlmF family.

The protein resides in the cytoplasm. The catalysed reaction is adenosine(1618) in 23S rRNA + S-adenosyl-L-methionine = N(6)-methyladenosine(1618) in 23S rRNA + S-adenosyl-L-homocysteine + H(+). Its function is as follows. Specifically methylates the adenine in position 1618 of 23S rRNA. The polypeptide is Ribosomal RNA large subunit methyltransferase F (Photobacterium profundum (strain SS9)).